The chain runs to 342 residues: Probable deoxyhypusine synthase (342 aa).

Lys307 acts as the Nucleophile in catalysis.

The protein belongs to the deoxyhypusine synthase family. The cofactor is NAD(+).

It catalyses the reaction [eIF5A protein]-L-lysine + spermidine = [eIF5A protein]-deoxyhypusine + propane-1,3-diamine. It functions in the pathway protein modification; eIF5A hypusination. Functionally, catalyzes the NAD-dependent oxidative cleavage of spermidine and the subsequent transfer of the butylamine moiety of spermidine to the epsilon-amino group of a specific lysine residue of the eIF-5A precursor protein to form the intermediate deoxyhypusine residue. This is Probable deoxyhypusine synthase (dys) from Pyrococcus horikoshii (strain ATCC 700860 / DSM 12428 / JCM 9974 / NBRC 100139 / OT-3).